The chain runs to 358 residues: Sesquiterpene synthase Agr3 (358 aa).

Residues D99, N246, S250, and E254 each contribute to the Mg(2+) site. Positions 99–103 match the DDXXD motif motif; it reads DNISD. Residues R334 and Y335 each coordinate (2E,6E)-farnesyl diphosphate.

The protein belongs to the terpene synthase family. The cofactor is Mg(2+).

The enzyme catalyses (2E,6E)-farnesyl diphosphate = alpha-muurolene + diphosphate. It carries out the reaction (2E,6E)-farnesyl diphosphate = gamma-muurolene + diphosphate. It catalyses the reaction (2E,6E)-farnesyl diphosphate = delta-cadinene + diphosphate. In terms of biological role, terpene cyclase that catalyzes the cyclization of farnesyl diphosphate (FPP) to various sesquiterpenes, including alpha-muurolene, gamma-muurolene, germacrene, delta-cadinene, delta-cadinol and cubenol. In Cyclocybe aegerita (Black poplar mushroom), this protein is Sesquiterpene synthase Agr3.